The following is a 281-amino-acid chain: 2,3,4,5-tetrahydropyridine-2,6-dicarboxylate N-succinyltransferase (281 aa).

Residues Arg-108 and Asp-145 each contribute to the substrate site.

Belongs to the transferase hexapeptide repeat family. In terms of assembly, homotrimer.

The protein localises to the cytoplasm. The enzyme catalyses (S)-2,3,4,5-tetrahydrodipicolinate + succinyl-CoA + H2O = (S)-2-succinylamino-6-oxoheptanedioate + CoA. The protein operates within amino-acid biosynthesis; L-lysine biosynthesis via DAP pathway; LL-2,6-diaminopimelate from (S)-tetrahydrodipicolinate (succinylase route): step 1/3. This Rhodopseudomonas palustris (strain ATCC BAA-98 / CGA009) protein is 2,3,4,5-tetrahydropyridine-2,6-dicarboxylate N-succinyltransferase.